The primary structure comprises 466 residues: Asparagine--tRNA ligase (466 aa).

This sequence belongs to the class-II aminoacyl-tRNA synthetase family. Homodimer.

It is found in the cytoplasm. The enzyme catalyses tRNA(Asn) + L-asparagine + ATP = L-asparaginyl-tRNA(Asn) + AMP + diphosphate + H(+). In Pectobacterium atrosepticum (strain SCRI 1043 / ATCC BAA-672) (Erwinia carotovora subsp. atroseptica), this protein is Asparagine--tRNA ligase.